The sequence spans 152 residues: Globin-1 subunit beta (152 aa).

Ser2 carries the post-translational modification N-acetylserine. The 141-residue stretch at 12-152 (VSNADQKDLL…SLVAVVQAAL (141 aa)) folds into the Globin domain. Heme b is bound by residues His72 and His104.

This sequence belongs to the globin family. As to quaternary structure, heterotetramer of two alpha chains and two beta chains.

The sequence is that of Globin-1 subunit beta from Anadara trapezia (Sydney cockle).